The following is a 354-amino-acid chain: Histidinol-phosphate aminotransferase (354 aa).

The residue at position 210 (lysine 210) is an N6-(pyridoxal phosphate)lysine.

This sequence belongs to the class-II pyridoxal-phosphate-dependent aminotransferase family. Histidinol-phosphate aminotransferase subfamily. As to quaternary structure, homodimer. The cofactor is pyridoxal 5'-phosphate.

It carries out the reaction L-histidinol phosphate + 2-oxoglutarate = 3-(imidazol-4-yl)-2-oxopropyl phosphate + L-glutamate. It participates in amino-acid biosynthesis; L-histidine biosynthesis; L-histidine from 5-phospho-alpha-D-ribose 1-diphosphate: step 7/9. This is Histidinol-phosphate aminotransferase from Clostridium botulinum (strain Okra / Type B1).